Reading from the N-terminus, the 357-residue chain is Probable dual-specificity RNA methyltransferase RlmN (357 aa).

Glu95 (proton acceptor) is an active-site residue. Residues 106–340 form the Radical SAM core domain; sequence NRDRHTVCVS…VSVREEKGTD (235 aa). A disulfide bridge connects residues Cys113 and Cys345. Positions 120, 124, and 127 each coordinate [4Fe-4S] cluster. Residues 172 to 173, Ser204, 227 to 229, and Asn302 each bind S-adenosyl-L-methionine; these read GE and SLH. Catalysis depends on Cys345, which acts as the S-methylcysteine intermediate.

The protein belongs to the radical SAM superfamily. RlmN family. The cofactor is [4Fe-4S] cluster.

Its subcellular location is the cytoplasm. It catalyses the reaction adenosine(2503) in 23S rRNA + 2 reduced [2Fe-2S]-[ferredoxin] + 2 S-adenosyl-L-methionine = 2-methyladenosine(2503) in 23S rRNA + 5'-deoxyadenosine + L-methionine + 2 oxidized [2Fe-2S]-[ferredoxin] + S-adenosyl-L-homocysteine. The catalysed reaction is adenosine(37) in tRNA + 2 reduced [2Fe-2S]-[ferredoxin] + 2 S-adenosyl-L-methionine = 2-methyladenosine(37) in tRNA + 5'-deoxyadenosine + L-methionine + 2 oxidized [2Fe-2S]-[ferredoxin] + S-adenosyl-L-homocysteine. Its function is as follows. Specifically methylates position 2 of adenine 2503 in 23S rRNA and position 2 of adenine 37 in tRNAs. In Desulfitobacterium hafniense (strain Y51), this protein is Probable dual-specificity RNA methyltransferase RlmN.